The following is a 446-amino-acid chain: NADH-ubiquinone oxidoreductase chain 4 (446 aa).

The next 14 membrane-spanning stretches (helical) occupy residues 4-24 (LILM…FWMV), 28-48 (LFVI…FVNI), 56-76 (VLSY…IVAS), 88-105 (LFLF…LTFS), 109-131 (LFMF…LGWG), 141-161 (VYLL…IFYL), 182-202 (LLYL…LVHL), 218-238 (ILAG…FSFL), 245-265 (YNYI…LVCL), 272-292 (ALIA…LMTL), 297-317 (LSGS…LFCL), 330-350 (LLIN…WFLL), 373-393 (IVSW…FSAA), and 426-446 (FLHW…LFWI).

This sequence belongs to the complex I subunit 4 family.

It localises to the mitochondrion membrane. It catalyses the reaction a ubiquinone + NADH + 5 H(+)(in) = a ubiquinol + NAD(+) + 4 H(+)(out). Its function is as follows. Core subunit of the mitochondrial membrane respiratory chain NADH dehydrogenase (Complex I) that is believed to belong to the minimal assembly required for catalysis. Complex I functions in the transfer of electrons from NADH to the respiratory chain. The immediate electron acceptor for the enzyme is believed to be ubiquinone. This is NADH-ubiquinone oxidoreductase chain 4 (ND4) from Ceratitis capitata (Mediterranean fruit fly).